Consider the following 316-residue polypeptide: Aspartate carbamoyltransferase catalytic subunit (316 aa).

Residues arginine 66 and threonine 67 each coordinate carbamoyl phosphate. Position 94 (lysine 94) interacts with L-aspartate. Residues arginine 116, histidine 146, and glutamine 149 each coordinate carbamoyl phosphate. 2 residues coordinate L-aspartate: arginine 179 and arginine 234. 2 residues coordinate carbamoyl phosphate: glycine 275 and proline 276.

The protein belongs to the aspartate/ornithine carbamoyltransferase superfamily. ATCase family. Heterododecamer (2C3:3R2) of six catalytic PyrB chains organized as two trimers (C3), and six regulatory PyrI chains organized as three dimers (R2).

It carries out the reaction carbamoyl phosphate + L-aspartate = N-carbamoyl-L-aspartate + phosphate + H(+). The protein operates within pyrimidine metabolism; UMP biosynthesis via de novo pathway; (S)-dihydroorotate from bicarbonate: step 2/3. Functionally, catalyzes the condensation of carbamoyl phosphate and aspartate to form carbamoyl aspartate and inorganic phosphate, the committed step in the de novo pyrimidine nucleotide biosynthesis pathway. This Nitrosomonas europaea (strain ATCC 19718 / CIP 103999 / KCTC 2705 / NBRC 14298) protein is Aspartate carbamoyltransferase catalytic subunit.